The primary structure comprises 369 residues: uncharacterized protein (369 aa).

The protein to A.pernix APE1276 and APE1804.

This is an uncharacterized protein from Saccharolobus solfataricus (strain ATCC 35092 / DSM 1617 / JCM 11322 / P2) (Sulfolobus solfataricus).